We begin with the raw amino-acid sequence, 372 residues long: UDP-N-acetylglucosamine--N-acetylmuramyl-(pentapeptide) pyrophosphoryl-undecaprenol N-acetylglucosamine transferase (372 aa).

UDP-N-acetyl-alpha-D-glucosamine contacts are provided by residues 11 to 13 (TAG), asparagine 123, arginine 160, serine 200, and glutamine 298.

It belongs to the glycosyltransferase 28 family. MurG subfamily.

The protein resides in the cell membrane. It carries out the reaction di-trans,octa-cis-undecaprenyl diphospho-N-acetyl-alpha-D-muramoyl-L-alanyl-D-glutamyl-meso-2,6-diaminopimeloyl-D-alanyl-D-alanine + UDP-N-acetyl-alpha-D-glucosamine = di-trans,octa-cis-undecaprenyl diphospho-[N-acetyl-alpha-D-glucosaminyl-(1-&gt;4)]-N-acetyl-alpha-D-muramoyl-L-alanyl-D-glutamyl-meso-2,6-diaminopimeloyl-D-alanyl-D-alanine + UDP + H(+). It participates in cell wall biogenesis; peptidoglycan biosynthesis. Functionally, cell wall formation. Catalyzes the transfer of a GlcNAc subunit on undecaprenyl-pyrophosphoryl-MurNAc-pentapeptide (lipid intermediate I) to form undecaprenyl-pyrophosphoryl-MurNAc-(pentapeptide)GlcNAc (lipid intermediate II). This Cutibacterium acnes (strain DSM 16379 / KPA171202) (Propionibacterium acnes) protein is UDP-N-acetylglucosamine--N-acetylmuramyl-(pentapeptide) pyrophosphoryl-undecaprenol N-acetylglucosamine transferase.